The sequence spans 322 residues: Pre-mRNA-splicing factor NTR2 (322 aa).

The disordered stretch occupies residues 1–30 (MAIKKRNKIRLPSGSPEEVGIDGSAHKPMQ). Serine 40 is modified (phosphoserine). The tract at residues 113-137 (LLSDSSEAGSSSEGEHISSIPTRGE) is disordered. Positions 115–132 (SDSSEAGSSSEGEHISSI) are enriched in low complexity. 2 positions are modified to phosphoserine: serine 153 and serine 197.

Component of the NTR complex (NTC-related complex), composed of NTR1, NTR2 and PRP43. Interacts with CLF1, NTR1 and PRP43.

Its subcellular location is the cytoplasm. The protein resides in the nucleus. Its function is as follows. Involved in pre-mRNA splicing and spliceosome disassembly. Promotes release of excised lariat intron from the spliceosome by acting as a receptor for PRP43. This targeting of PRP43 leads to disassembly of the spliceosome with the separation of the U2, U5, U6 snRNPs and the NTC complex. The polypeptide is Pre-mRNA-splicing factor NTR2 (NTR2) (Saccharomyces cerevisiae (strain ATCC 204508 / S288c) (Baker's yeast)).